A 782-amino-acid polypeptide reads, in one-letter code: Hypersensitive to pore-forming toxin protein 40 (782 aa).

The Tudor; degenerate domain occupies 138 to 203 (ESEIVPGAMY…TLFVSDQFSI (66 aa)). 2 stretches are compositionally biased toward polar residues: residues 332 to 346 (SVNP…SSSM) and 413 to 443 (FEST…STIQ). 4 disordered regions span residues 332–351 (SVNP…DCPY), 413–448 (FEST…NEED), 472–492 (IERP…NMSE), and 617–672 (VAQG…LEDP). The segment covering 617 to 634 (VAQGSNAPKTAPNDSVNS) has biased composition (polar residues). Residues 638–662 (DDIHETDKRGNHCKSVTEDPKDNKD) show a composition bias toward basic and acidic residues.

It is found in the cytoplasm. The protein resides in the perinuclear region. The protein is Hypersensitive to pore-forming toxin protein 40 of Caenorhabditis elegans.